The primary structure comprises 232 residues: Ribonuclease 3 (232 aa).

The RNase III domain maps to 5-134 (NDAISKIIDY…LIGAIYIDGG (130 aa)). Glutamate 47 provides a ligand contact to Mg(2+). Aspartate 51 is a catalytic residue. Residues asparagine 120 and glutamate 123 each coordinate Mg(2+). Glutamate 123 is an active-site residue. Residues 159 to 228 (DPKTSLQEWT…AELMLEKIGK (70 aa)) form the DRBM domain.

The protein belongs to the ribonuclease III family. Homodimer. The cofactor is Mg(2+).

Its subcellular location is the cytoplasm. The enzyme catalyses Endonucleolytic cleavage to 5'-phosphomonoester.. Digests double-stranded RNA. Involved in the processing of primary rRNA transcript to yield the immediate precursors to the large and small rRNAs (23S and 16S). Processes some mRNAs, and tRNAs when they are encoded in the rRNA operon. Processes pre-crRNA and tracrRNA of type II CRISPR loci if present in the organism. The protein is Ribonuclease 3 of Wolbachia pipientis wMel.